Reading from the N-terminus, the 141-residue chain is Large ribosomal subunit protein uL11 (141 aa).

Belongs to the universal ribosomal protein uL11 family. In terms of assembly, part of the ribosomal stalk of the 50S ribosomal subunit. Interacts with L10 and the large rRNA to form the base of the stalk. L10 forms an elongated spine to which L12 dimers bind in a sequential fashion forming a multimeric L10(L12)X complex. In terms of processing, one or more lysine residues are methylated.

Functionally, forms part of the ribosomal stalk which helps the ribosome interact with GTP-bound translation factors. The polypeptide is Large ribosomal subunit protein uL11 (Methylacidiphilum infernorum (isolate V4) (Methylokorus infernorum (strain V4))).